Here is a 542-residue protein sequence, read N- to C-terminus: Putative sodium-dependent excitatory amino acid transporter glt-6 (542 aa).

Over 1-15 the chain is Cytoplasmic; sequence MKSKRRDDIVQFCRE. 3 helical membrane passes run 16-36, 55-75, and 93-113; these read NTLL…GFGL, IFMQ…LISA, and LYYL…VTVI. Residues 114–191 lie on the Extracellular side of the membrane; that stretch reads HPGDPSIKGT…IVKRSIGMTK (78 aa). Asparagine 175 carries an N-linked (GlcNAc...) asparagine glycan. 5 helical membrane passes run 192–212, 234–254, 265–285, 303–323, and 386–406; these read GMNI…ISQL, VVTL…GNLL, VLAL…IITV, GMIQ…TLPM, and TIAS…LLIL. Residues 505 to 517 are compositionally biased toward low complexity; the sequence is RIGSRIGSRRPSS. Residues 505–542 form a disordered region; sequence RIGSRIGSRRPSSTNLHLSWRNNNIEPPYTPLPNDENV. Polar residues predominate over residues 518–529; the sequence is TNLHLSWRNNNI.

Belongs to the dicarboxylate/amino acid:cation symporter (DAACS) (TC 2.A.23) family.

It is found in the membrane. This is Putative sodium-dependent excitatory amino acid transporter glt-6 (glt-6) from Caenorhabditis elegans.